We begin with the raw amino-acid sequence, 424 residues long: Tyrosine--tRNA ligase (424 aa).

Y37 is a binding site for L-tyrosine. The short motif at 42-51 (PTADSLHLGH) is the 'HIGH' region element. K144 bears the N6-acetyllysine mark. Y175 and Q179 together coordinate L-tyrosine. A 'KMSKS' region motif is present at residues 235 to 239 (KFGKT). K238 contributes to the ATP binding site. One can recognise an S4 RNA-binding domain in the interval 357 to 414 (ADLMQALVDSELQPSRGQARKTIASNAITINGEKQSDPEYFFKEEDRLFGRFTLLRRG).

The protein belongs to the class-I aminoacyl-tRNA synthetase family. TyrS type 1 subfamily. In terms of assembly, homodimer.

It localises to the cytoplasm. The enzyme catalyses tRNA(Tyr) + L-tyrosine + ATP = L-tyrosyl-tRNA(Tyr) + AMP + diphosphate + H(+). In terms of biological role, catalyzes the attachment of tyrosine to tRNA(Tyr) in a two-step reaction: tyrosine is first activated by ATP to form Tyr-AMP and then transferred to the acceptor end of tRNA(Tyr). This is Tyrosine--tRNA ligase from Shigella boydii serotype 4 (strain Sb227).